The primary structure comprises 241 residues: Glutathione S-transferase omega-1 (241 aa).

S2 carries the post-translational modification N-acetylserine. In terms of domain architecture, GST N-terminal spans 22-101; sequence GSIRIYSMRF…YLDEAYPGKK (80 aa). C32 serves as the catalytic Nucleophile. K57 carries the N6-acetyllysine modification. Glutathione contacts are provided by residues K59, V72, and 85–86; that span reads ES. One can recognise a GST C-terminal domain in the interval 106-230; the sequence is DPYEKACQKM…DWQGFLELYL (125 aa). Phosphoserine is present on S129. An N6-acetyllysine mark is found at K143, K148, and K152.

The protein belongs to the GST superfamily. Omega family. As to quaternary structure, homodimer. Ubiquitous. Highest expression in liver, pancreas, skeletal muscle, spleen, thymus, colon, blood leukocyte and heart. Lowest expression in brain, placenta and lung.

The protein resides in the cytoplasm. It is found in the cytosol. It catalyses the reaction RX + glutathione = an S-substituted glutathione + a halide anion + H(+). It carries out the reaction L-dehydroascorbate + 2 glutathione = glutathione disulfide + L-ascorbate. The catalysed reaction is methylarsonate + 2 glutathione + H(+) = methylarsonous acid + glutathione disulfide + H2O. Its activity is regulated as follows. Monomethylarsonic acid reductase activity is competitively inhibited by 1-chloro 2,4-dinitrobenzene (CDNB) and by deoxycholate. Functionally, exhibits glutathione-dependent thiol transferase and dehydroascorbate reductase activities. Has S-(phenacyl)glutathione reductase activity. Also has glutathione S-transferase activity. Participates in the biotransformation of inorganic arsenic and reduces monomethylarsonic acid (MMA) and dimethylarsonic acid. The polypeptide is Glutathione S-transferase omega-1 (GSTO1) (Homo sapiens (Human)).